A 251-amino-acid polypeptide reads, in one-letter code: GTP cyclohydrolase 1 type 2 homolog (251 aa).

Residues His-64, His-65, Asp-102, His-219, and Glu-223 each coordinate a divalent metal cation.

Belongs to the GTP cyclohydrolase I type 2/NIF3 family. As to quaternary structure, homohexamer.

The sequence is that of GTP cyclohydrolase 1 type 2 homolog from Chlamydia muridarum (strain MoPn / Nigg).